The following is a 214-amino-acid chain: Phosphatidylserine decarboxylase proenzyme (214 aa).

Residue serine 182 is the Schiff-base intermediate with substrate; via pyruvic acid of the active site. Serine 182 carries the pyruvic acid (Ser); by autocatalysis modification.

The protein belongs to the phosphatidylserine decarboxylase family. PSD-A subfamily. Heterodimer of a large membrane-associated beta subunit and a small pyruvoyl-containing alpha subunit. The cofactor is pyruvate. Is synthesized initially as an inactive proenzyme. Formation of the active enzyme involves a self-maturation process in which the active site pyruvoyl group is generated from an internal serine residue via an autocatalytic post-translational modification. Two non-identical subunits are generated from the proenzyme in this reaction, and the pyruvate is formed at the N-terminus of the alpha chain, which is derived from the carboxyl end of the proenzyme. The post-translation cleavage follows an unusual pathway, termed non-hydrolytic serinolysis, in which the side chain hydroxyl group of the serine supplies its oxygen atom to form the C-terminus of the beta chain, while the remainder of the serine residue undergoes an oxidative deamination to produce ammonia and the pyruvoyl prosthetic group on the alpha chain.

The protein localises to the cell membrane. It carries out the reaction a 1,2-diacyl-sn-glycero-3-phospho-L-serine + H(+) = a 1,2-diacyl-sn-glycero-3-phosphoethanolamine + CO2. It participates in phospholipid metabolism; phosphatidylethanolamine biosynthesis; phosphatidylethanolamine from CDP-diacylglycerol: step 2/2. Catalyzes the formation of phosphatidylethanolamine (PtdEtn) from phosphatidylserine (PtdSer). This chain is Phosphatidylserine decarboxylase proenzyme, found in Burkholderia cenocepacia (strain HI2424).